A 360-amino-acid polypeptide reads, in one-letter code: Peptide chain release factor 1 (360 aa).

Gln235 is modified (N5-methylglutamine). The segment at 285 to 313 (KRQQAEASTRRNLLGSGDRSDRNRTYNFP) is disordered.

The protein belongs to the prokaryotic/mitochondrial release factor family. Post-translationally, methylated by PrmC. Methylation increases the termination efficiency of RF1.

Its subcellular location is the cytoplasm. In terms of biological role, peptide chain release factor 1 directs the termination of translation in response to the peptide chain termination codons UAG and UAA. This Salmonella paratyphi A (strain ATCC 9150 / SARB42) protein is Peptide chain release factor 1.